The primary structure comprises 301 residues: Sulfate adenylyltransferase subunit 2 (301 aa).

Belongs to the PAPS reductase family. CysD subfamily. Heterodimer composed of CysD, the smaller subunit, and CysN.

The enzyme catalyses sulfate + ATP + H(+) = adenosine 5'-phosphosulfate + diphosphate. It participates in sulfur metabolism; hydrogen sulfide biosynthesis; sulfite from sulfate: step 1/3. Functionally, with CysN forms the ATP sulfurylase (ATPS) that catalyzes the adenylation of sulfate producing adenosine 5'-phosphosulfate (APS) and diphosphate, the first enzymatic step in sulfur assimilation pathway. APS synthesis involves the formation of a high-energy phosphoric-sulfuric acid anhydride bond driven by GTP hydrolysis by CysN coupled to ATP hydrolysis by CysD. The protein is Sulfate adenylyltransferase subunit 2 of Shewanella loihica (strain ATCC BAA-1088 / PV-4).